We begin with the raw amino-acid sequence, 274 residues long: Large ribosomal subunit protein uL2 (274 aa).

Disordered regions lie at residues 34 to 53 (IAPI…TMRY) and 216 to 274 (RRPR…RRKK).

It belongs to the universal ribosomal protein uL2 family. As to quaternary structure, part of the 50S ribosomal subunit. Forms a bridge to the 30S subunit in the 70S ribosome.

Functionally, one of the primary rRNA binding proteins. Required for association of the 30S and 50S subunits to form the 70S ribosome, for tRNA binding and peptide bond formation. It has been suggested to have peptidyltransferase activity; this is somewhat controversial. Makes several contacts with the 16S rRNA in the 70S ribosome. This Flavobacterium psychrophilum (strain ATCC 49511 / DSM 21280 / CIP 103535 / JIP02/86) protein is Large ribosomal subunit protein uL2.